A 277-amino-acid chain; its full sequence is Short chain dehydrogenase penD (277 aa).

NADP(+) contacts are provided by Ile28, Asp76, and Asn105. Active-site proton donor residues include Ser158 and Ser159. Residues Tyr173, Lys177, and Thr209 each contribute to the NADP(+) site. The active-site Proton acceptor is Tyr173. Residue Lys177 is the Lowers pKa of active site Tyr of the active site.

It belongs to the short-chain dehydrogenases/reductases (SDR) family.

It catalyses the reaction yaequinolone D + NADPH + H(+) = penigequinolone A + NADP(+) + H2O. It carries out the reaction yaequinolone D + NADPH + H(+) = penigequinolone B + NADP(+) + H2O. It participates in secondary metabolite biosynthesis. Its pathway is alkaloid biosynthesis. The protein operates within mycotoxin biosynthesis. Functionally, short chain dehydrogenase; part of the gene cluster that mediates the biosynthesis of penigequinolones, potent insecticidal alkaloids that contain a highly modified 10-carbon prenyl group. The first stage is catalyzed by the nonribosomal peptide synthetase penN that condenses anthranilic acid and O-methyl-L-tyrosine to produce 4'-methoxycyclopeptin. 4'-methoxycyclopeptin is then converted to 4'-methoxydehydrocyclopeptin by the ketoglutarate-dependent dioxygenase penM through dehydrogenation to form a double bond between C-alpha and C-beta of the O-methyltyrosine side chain. PenM also converts its first product methoxydehydrocyclopeptin to 4'-methoxycyclopenin. The following conversion of 4'methoxycyclopenin into 4'-methoxyviridicatin is catalyzed by the cyclopenase penL. 4'-methoxyviridicatin is the precursor of quinolone natural products, and is further converted to quinolinone B. The prenyltransferase penI then catalyzes the canonical Friedel-Crafts alkylation of quinolinone B with dimethylallyl cation to yield dimethylallyl quinolone, which is subjected to FAD-dependent dehydrogenation by the FAD-linked oxidoreductase penH to yield conjugated aryl diene. The delta(3') double bond then serves as the site of the second alkylation with DMAPP catalyzed by the prenyltransferase penG to yield a carbenium ion intermediate, which can be attacked by H(2)O to yield a styrenyl quinolone containing a C3'-hydroxyprenyl chain, or undergo cyclization to yield yaequinolones J1 and J2. The conversion of the styrenyl quinolone into the tetrahydrofuran-containing yaequinolone C is performed by the FAD-dependent monooxygenase penE and involves epoxidation of the terminal C7'-C8' olefin, followed by epoxide ring opening initiated by the C3' hydroxyl group. The predicted cysteine hydrolase penJ acts as an epoxide hydrolase that enhances the rate of the 5-exo-tet cyclization step, increasing the yield of yaequinolone C. PenF catalyzes the cationic rearrangement of the epoxide formed by penE (before ring opening to produce yaequinolone C) into yaequinolone D. Finally, the short-chain dehydrogenase/reductase (SDR)-like reductase penD, catalyzes both the dehydration of yaequinolone D and the reduction of the resulting oxonium to yield penigequinolone. This is Short chain dehydrogenase penD from Penicillium thymicola.